The primary structure comprises 241 residues: Phosphatidylcholine synthase (241 aa).

The Cytoplasmic segment spans residues 1–15; it reads MKIFNYKRVPYAEIR. Residues 16–36 form a helical membrane-spanning segment; sequence AFSVHILTASGSFLAFLGVVA. Residues 37-41 lie on the Periplasmic side of the membrane; it reads ASEHR. A helical transmembrane segment spans residues 42–62; that stretch reads FVDMFWWLGLALLVDGIDGPI. The Cytoplasmic portion of the chain corresponds to 63–76; it reads ARKVRVKEVLPNWS. A helical membrane pass occupies residues 77–97; sequence GDTLDNIIDYVTYVLLPAFAL. The Periplasmic segment spans residues 98 to 100; the sequence is YQS. A helical membrane pass occupies residues 101 to 121; sequence GMIGEPLSFVAAGMIVVSSAI. Residues 122 to 133 are Cytoplasmic-facing; the sequence is YYADMGMKTDEY. Residues 134-154 form a helical membrane-spanning segment; that stretch reads FFSGFPVVWNMVVFTLFVMDA. Topologically, residues 155-159 are periplasmic; sequence SATTA. Residues 160 to 180 form a helical membrane-spanning segment; that stretch reads MTVVTVSVFLTFLPINFLHPV. At 181–187 the chain is on the cytoplasmic side; it reads RVKRLRP. A helical transmembrane segment spans residues 188-208; it reads LNLLVVAIWCALGGYALLMHF. Residues 209 to 214 lie on the Periplasmic side of the membrane; it reads ETPTWA. The helical transmembrane segment at 215-235 threads the bilayer; it reads VIAFVASGIYLYCIGGILQFF. Topologically, residues 236–241 are cytoplasmic; sequence PSLGAK.

The protein belongs to the CDP-alcohol phosphatidyltransferase class-I family. Mn(2+) serves as cofactor.

Its subcellular location is the cell inner membrane. The catalysed reaction is a CDP-1,2-diacyl-sn-glycerol + choline = a 1,2-diacyl-sn-glycero-3-phosphocholine + CMP + H(+). Condenses choline with CDP-diglyceride to produce phosphatidylcholine and CMP. Affects motility, biofilm formation and virulence of this bacterium when there is a complete loss of phosphatidylcholine formation due to absence of both the synthase (pcs) and the methylation (pmtA) pathways. This chain is Phosphatidylcholine synthase, found in Agrobacterium fabrum (strain C58 / ATCC 33970) (Agrobacterium tumefaciens (strain C58)).